Consider the following 1208-residue polypeptide: Putative protease AXL1 (1208 aa).

His-68 provides a ligand contact to Zn(2+). The active-site Proton acceptor is the Glu-71. Zn(2+) contacts are provided by His-72 and Glu-156. Ser-262 bears the Phosphoserine mark.

The protein belongs to the peptidase M16 family. In terms of assembly, interacts with BUD5. It depends on Zn(2+) as a cofactor.

It is found in the bud neck. Functionally, probable protease. Involved in axial budding. This Saccharomyces cerevisiae (strain ATCC 204508 / S288c) (Baker's yeast) protein is Putative protease AXL1 (AXL1).